Consider the following 98-residue polypeptide: NADH-ubiquinone oxidoreductase chain 4L (98 aa).

A run of 3 helical transmembrane segments spans residues Pro2 to Phe22, Ser29 to Met49, and Ile61 to Met81.

Belongs to the complex I subunit 4L family. As to quaternary structure, core subunit of respiratory chain NADH dehydrogenase (Complex I) which is composed of 45 different subunits.

The protein localises to the mitochondrion inner membrane. It catalyses the reaction a ubiquinone + NADH + 5 H(+)(in) = a ubiquinol + NAD(+) + 4 H(+)(out). In terms of biological role, core subunit of the mitochondrial membrane respiratory chain NADH dehydrogenase (Complex I) which catalyzes electron transfer from NADH through the respiratory chain, using ubiquinone as an electron acceptor. Part of the enzyme membrane arm which is embedded in the lipid bilayer and involved in proton translocation. The protein is NADH-ubiquinone oxidoreductase chain 4L (MT-ND4L) of Lepilemur seali (Seal's sportive lemur).